The chain runs to 270 residues: NAD kinase (270 aa).

Asp62 serves as the catalytic Proton acceptor. Residues 62-63, Arg67, 129-130, Lys140, Asp159, Ile167, 170-175, Ala194, and Gln227 each bind NAD(+); these read DG, ND, and TSYSFS.

The protein belongs to the NAD kinase family. It depends on a divalent metal cation as a cofactor.

The protein resides in the cytoplasm. It catalyses the reaction NAD(+) + ATP = ADP + NADP(+) + H(+). Involved in the regulation of the intracellular balance of NAD and NADP, and is a key enzyme in the biosynthesis of NADP. Catalyzes specifically the phosphorylation on 2'-hydroxyl of the adenosine moiety of NAD to yield NADP. The polypeptide is NAD kinase (Picrophilus torridus (strain ATCC 700027 / DSM 9790 / JCM 10055 / NBRC 100828 / KAW 2/3)).